The chain runs to 88 residues: UPF0223 protein RBAM_014500 (88 aa).

The protein belongs to the UPF0223 family.

The chain is UPF0223 protein RBAM_014500 from Bacillus velezensis (strain DSM 23117 / BGSC 10A6 / LMG 26770 / FZB42) (Bacillus amyloliquefaciens subsp. plantarum).